The primary structure comprises 913 residues: DNA polymerase I (913 aa).

Positions 1–305 (MSQAPLVLVD…AGENGEAETP (305 aa)) constitute a 5'-3' exonuclease domain. A 3'-5' exonuclease domain is found at 306 to 501 (IQAEVDYDVV…LHQALWQKLE (196 aa)). The interval 505-913 (SLARVLTDIE…GVGSNWDEAH (409 aa)) is polymerase.

The protein belongs to the DNA polymerase type-A family. As to quaternary structure, single-chain monomer with multiple functions.

It catalyses the reaction DNA(n) + a 2'-deoxyribonucleoside 5'-triphosphate = DNA(n+1) + diphosphate. In addition to polymerase activity, this DNA polymerase exhibits 3'-5' and 5'-3' exonuclease activity. The sequence is that of DNA polymerase I (polA) from Pseudomonas aeruginosa (strain ATCC 15692 / DSM 22644 / CIP 104116 / JCM 14847 / LMG 12228 / 1C / PRS 101 / PAO1).